Here is a 341-residue protein sequence, read N- to C-terminus: Twinfilin-2 (341 aa).

ADF-H domains lie at 1–131 (ATEE…KHLS) and 169–305 (GLAF…DEVH). The residue at position 6 (lysine 6) is an N6-acetyllysine. At tyrosine 301 the chain carries Phosphotyrosine. The interval 314 to 341 (AFAKPKGPGGKRGHKRLIRGPGENGDDS) is disordered. Basic residues predominate over residues 322–331 (GGKRGHKRLI). Serine 341 carries the phosphoserine modification.

Belongs to the actin-binding proteins ADF family. Twinfilin subfamily. As to quaternary structure, interacts with G-actin; ADP-actin form and capping protein (CP). May also be able to interact with TWF1 and phosphoinositides, PI(4,5)P2. When bound to PI(4,5)P2, it is down-regulated. Interacts with MYO7A. Post-translationally, phosphorylated on both serine and threonine residues.

The protein localises to the cytoplasm. It localises to the cytoskeleton. Its subcellular location is the perinuclear region. It is found in the cell projection. The protein resides in the stereocilium. Functionally, actin-binding protein involved in motile and morphological processes. Inhibits actin polymerization, likely by sequestering G-actin. By capping the barbed ends of filaments, it also regulates motility. Seems to play an important role in clathrin-mediated endocytosis and distribution of endocytic organelles. May play a role in regulating the mature length of the middle and short rows of stereocilia. This is Twinfilin-2 (TWF2) from Pongo abelii (Sumatran orangutan).